We begin with the raw amino-acid sequence, 85 residues long: 4-hydroxyphenylacetate decarboxylase small subunit (85 aa).

Residues His-4, Cys-7, Cys-20, Cys-34, Cys-43, Cys-46, Cys-60, and Cys-78 each coordinate [4Fe-4S] cluster.

It belongs to the HPA decarboxylase small subunit family. In terms of assembly, heterooctamer consisting of 4 large (HpdB) subunits and 4 small (HpdC) subunits, arranged as a tetramer of heterodimers. [4Fe-4S] cluster serves as cofactor.

The catalysed reaction is 4-hydroxyphenylacetate + H(+) = 4-methylphenol + CO2. The enzyme catalyses 3,4-dihydroxyphenylacetate + H(+) = 4-methylcatechol + CO2. Component of the HPA decarboxylase that decarboxylates phenylacetates with a hydroxyl group in the p-position. Active toward 4-hydroxyphenylacetate and 3,4-dihydroxyphenylacetate, forming 4-methylphenol and 4-methylcatechol, respectively. Is likely involved in the catabolism of aromatic amino acids such as tyrosine fermentation. 4-methylphenol (p-cresol) formation provides metabolic toxicity, which allows an active suppression of other microbes and may provide growth advantages for the producers in highly competitive environments. The small subunit is essential for enzymatic activity of HPA decarboxylase, and also seems to be involved in the regulation of the enzyme oligomeric state and catalytic activity. This Clostridioides difficile (strain 630) (Peptoclostridium difficile) protein is 4-hydroxyphenylacetate decarboxylase small subunit.